Consider the following 383-residue polypeptide: UDP-N-acetylglucosamine--N-acetylmuramyl-(pentapeptide) pyrophosphoryl-undecaprenol N-acetylglucosamine transferase (383 aa).

UDP-N-acetyl-alpha-D-glucosamine is bound by residues 10–12 (TGG), N124, R165, S190, I245, and Q290. Residues 363–383 (SPFGQAREPGQKPARPPDPAS) are disordered.

Belongs to the glycosyltransferase 28 family. MurG subfamily.

The protein localises to the cell inner membrane. The catalysed reaction is di-trans,octa-cis-undecaprenyl diphospho-N-acetyl-alpha-D-muramoyl-L-alanyl-D-glutamyl-meso-2,6-diaminopimeloyl-D-alanyl-D-alanine + UDP-N-acetyl-alpha-D-glucosamine = di-trans,octa-cis-undecaprenyl diphospho-[N-acetyl-alpha-D-glucosaminyl-(1-&gt;4)]-N-acetyl-alpha-D-muramoyl-L-alanyl-D-glutamyl-meso-2,6-diaminopimeloyl-D-alanyl-D-alanine + UDP + H(+). Its pathway is cell wall biogenesis; peptidoglycan biosynthesis. Its function is as follows. Cell wall formation. Catalyzes the transfer of a GlcNAc subunit on undecaprenyl-pyrophosphoryl-MurNAc-pentapeptide (lipid intermediate I) to form undecaprenyl-pyrophosphoryl-MurNAc-(pentapeptide)GlcNAc (lipid intermediate II). The protein is UDP-N-acetylglucosamine--N-acetylmuramyl-(pentapeptide) pyrophosphoryl-undecaprenol N-acetylglucosamine transferase of Anaeromyxobacter dehalogenans (strain 2CP-1 / ATCC BAA-258).